Here is a 220-residue protein sequence, read N- to C-terminus: Probable GTP-binding protein EngB (220 aa).

The 177-residue stretch at S23–I199 folds into the EngB-type G domain. Residues S38 and T60 each coordinate Mg(2+).

It belongs to the TRAFAC class TrmE-Era-EngA-EngB-Septin-like GTPase superfamily. EngB GTPase family. The cofactor is Mg(2+).

Its function is as follows. Necessary for normal cell division and for the maintenance of normal septation. The chain is Probable GTP-binding protein EngB from Dechloromonas aromatica (strain RCB).